We begin with the raw amino-acid sequence, 407 residues long: Indoleamine 2,3-dioxygenase 2 (407 aa).

His347 is a binding site for heme.

This sequence belongs to the indoleamine 2,3-dioxygenase family. Heme serves as cofactor. As to expression, detected in liver, small intestine, spleen, placenta, thymus, lung, brain, kidney, and colon. Also expressed at low level in testis and thyroid. Not expressed in the majority of human tumor samples (&gt;99%).

It carries out the reaction L-tryptophan + O2 = N-formyl-L-kynurenine. The protein operates within amino-acid degradation; L-tryptophan degradation via kynurenine pathway; L-kynurenine from L-tryptophan: step 1/2. Its activity is regulated as follows. Activity is inhibited by D-1MT (1-methyl-D-tryptophan) and MTH-trp (methylthiohydantoin-DL-tryptophan) but not L-1MT (1-methyl-L-tryptophan). Catalyzes the first and rate limiting step of the catabolism of the essential amino acid tryptophan along the kynurenine pathway. Involved in immune regulation. May not play a significant role in tryptophan-related tumoral resistance. The chain is Indoleamine 2,3-dioxygenase 2 from Homo sapiens (Human).